Here is a 362-residue protein sequence, read N- to C-terminus: E3 ubiquitin-protein ligase TM129 (362 aa).

At 1 to 6 the chain is on the lumenal side; it reads MDSPEV. A helical membrane pass occupies residues 7–27; the sequence is TFTLAYLVFAVCFVFTPTEFH. The Cytoplasmic segment spans residues 28 to 56; sequence SAGLTVQNLLSGWLGSEDAAFVPYHLRRT. The helical transmembrane segment at 57-77 threads the bilayer; the sequence is AATLLCHSLLPLGYYVGMCFA. Residues 78 to 94 are Lumenal-facing; the sequence is ASEKQLYYPSQTPETWR. A helical transmembrane segment spans residues 95-115; it reads AFLLLALMLPAIACTLIYYWS. At 116–362 the chain is on the cytoplasmic side; the sequence is RDHWACHPLA…FCVLDVCAVR (247 aa). The RING-type; degenerate zinc-finger motif lies at 285–350; that stretch reads CIGCMQTQAS…ASRVPCPTCR (66 aa).

Belongs to the TMEM129 family. In terms of assembly, integral component of ER-resident dislocation complexes.

It is found in the endoplasmic reticulum membrane. The catalysed reaction is S-ubiquitinyl-[E2 ubiquitin-conjugating enzyme]-L-cysteine + [acceptor protein]-L-lysine = [E2 ubiquitin-conjugating enzyme]-L-cysteine + N(6)-ubiquitinyl-[acceptor protein]-L-lysine.. It participates in protein modification; protein ubiquitination. E3 ubiquitin-protein ligase involved in ER-associated protein degradation, preferentially associates with the E2 enzyme UBE2J2. Exploited by viral US11 proteins to mediate HLA class I proteins degradation. The protein is E3 ubiquitin-protein ligase TM129 (TMEM129) of Bos taurus (Bovine).